The chain runs to 68 residues: Large ribosomal subunit protein eL24 (68 aa).

The Zn(2+) site is built by Cys-7, Cys-10, Cys-33, and Cys-37. The segment at 7-37 (CSYCGREFEPGTGKMFVRNDGRVLFFCSSKC) adopts a C4-type zinc-finger fold.

It belongs to the eukaryotic ribosomal protein eL24 family. In terms of assembly, part of the 50S ribosomal subunit. Forms a cluster with proteins L3 and L14. Zn(2+) is required as a cofactor.

Its function is as follows. Binds to the 23S rRNA. The sequence is that of Large ribosomal subunit protein eL24 from Thermococcus gammatolerans (strain DSM 15229 / JCM 11827 / EJ3).